The primary structure comprises 114 residues: N(4)-acetylcytidine amidohydrolase (114 aa).

The 86-residue stretch at 8-93 (TFFEFLTPLV…ALIQEIYPNI (86 aa)) folds into the ASCH domain. The Proton acceptor role is filled by Lys-22. The active-site Nucleophile is the Thr-25. Catalysis depends on Glu-75, which acts as the Proton donor.

The protein belongs to the N(4)-acetylcytidine amidohydrolase family.

It carries out the reaction N(4)-acetylcytidine + H2O = cytidine + acetate + H(+). The enzyme catalyses N(4)-acetyl-2'-deoxycytidine + H2O = 2'-deoxycytidine + acetate + H(+). It catalyses the reaction N(4)-acetylcytosine + H2O = cytosine + acetate + H(+). Functionally, catalyzes the hydrolysis of N(4)-acetylcytidine (ac4C). The polypeptide is N(4)-acetylcytidine amidohydrolase (Vibrio cholerae serotype O1 (strain ATCC 39541 / Classical Ogawa 395 / O395)).